A 358-amino-acid chain; its full sequence is Uroporphyrinogen decarboxylase (358 aa).

Substrate is bound by residues 29–33 (RQAGR), Phe-48, Asp-79, Tyr-155, Ser-210, and His-330.

Belongs to the uroporphyrinogen decarboxylase family. As to quaternary structure, homodimer.

It localises to the cytoplasm. It catalyses the reaction uroporphyrinogen III + 4 H(+) = coproporphyrinogen III + 4 CO2. Its pathway is porphyrin-containing compound metabolism; protoporphyrin-IX biosynthesis; coproporphyrinogen-III from 5-aminolevulinate: step 4/4. Functionally, catalyzes the decarboxylation of four acetate groups of uroporphyrinogen-III to yield coproporphyrinogen-III. This Bordetella bronchiseptica (strain ATCC BAA-588 / NCTC 13252 / RB50) (Alcaligenes bronchisepticus) protein is Uroporphyrinogen decarboxylase.